The chain runs to 349 residues: Protein RecA (349 aa).

An ATP-binding site is contributed by 65–72; sequence GPESSGKT. Positions 329–349 are disordered; sequence KASDQTAAHDETEEEPDLLES. Positions 339–349 are enriched in acidic residues; the sequence is ETEEEPDLLES.

It belongs to the RecA family.

It localises to the cytoplasm. Can catalyze the hydrolysis of ATP in the presence of single-stranded DNA, the ATP-dependent uptake of single-stranded DNA by duplex DNA, and the ATP-dependent hybridization of homologous single-stranded DNAs. It interacts with LexA causing its activation and leading to its autocatalytic cleavage. This is Protein RecA from Acinetobacter baylyi (strain ATCC 33305 / BD413 / ADP1).